Reading from the N-terminus, the 226-residue chain is Ribonuclease 3 (226 aa).

The RNase III domain occupies 2-129 (IESISKIIKY…LIGAIYLDGG (128 aa)). Position 42 (glutamate 42) interacts with Mg(2+). Aspartate 46 is an active-site residue. Asparagine 115 and glutamate 118 together coordinate Mg(2+). The active site involves glutamate 118. A DRBM domain is found at 154–223 (DAKTILQELV…ASLMLNQIHN (70 aa)).

The protein belongs to the ribonuclease III family. In terms of assembly, homodimer. Mg(2+) serves as cofactor.

It is found in the cytoplasm. The enzyme catalyses Endonucleolytic cleavage to 5'-phosphomonoester.. Digests double-stranded RNA. Involved in the processing of primary rRNA transcript to yield the immediate precursors to the large and small rRNAs (23S and 16S). Processes some mRNAs, and tRNAs when they are encoded in the rRNA operon. Processes pre-crRNA and tracrRNA of type II CRISPR loci if present in the organism. This is Ribonuclease 3 from Ehrlichia chaffeensis (strain ATCC CRL-10679 / Arkansas).